A 275-amino-acid chain; its full sequence is Translation initiation factor 2 subunit alpha (275 aa).

An S1 motif domain is found at 12–83 (GEFVVATVKN…EKGHIDLSLK (72 aa)).

Belongs to the eIF-2-alpha family. In terms of assembly, heterotrimer composed of an alpha, a beta and a gamma chain.

EIF-2 functions in the early steps of protein synthesis by forming a ternary complex with GTP and initiator tRNA. This is Translation initiation factor 2 subunit alpha from Thermococcus kodakarensis (strain ATCC BAA-918 / JCM 12380 / KOD1) (Pyrococcus kodakaraensis (strain KOD1)).